The primary structure comprises 475 residues: Squamosa promoter-binding-like protein 12 (475 aa).

The interval 49 to 73 (NHGSTNSSGGTFTSSSELANGSSKS) is disordered. A compositionally biased stretch (low complexity) spans 51-73 (GSTNSSGGTFTSSSELANGSSKS). The SBP-type zinc finger occupies 177-254 (SSYCQVEGCK…SDHNARRRKP (78 aa)). Zn(2+)-binding residues include C180, C185, C202, H205, C221, C224, H228, and C240. The short motif at 237 to 253 (KKSCRRRLSDHNARRRK) is the Bipartite nuclear localization signal element. Positions 437 to 475 (GGGGFWQDGDDPPPLDHASQAQAFMHPGNGSSSGYGHLH) are disordered. Positions 465–475 (NGSSSGYGHLH) are enriched in polar residues.

As to expression, expressed in young panicles.

It is found in the nucleus. In terms of biological role, trans-acting factor that binds specifically to the consensus nucleotide sequence 5'-TNCGTACAA-3'. May be involved in panicle development. The sequence is that of Squamosa promoter-binding-like protein 12 (SPL12) from Oryza sativa subsp. japonica (Rice).